Here is a 342-residue protein sequence, read N- to C-terminus: uncharacterized protein (342 aa).

It belongs to the cycloisomerase 2 family.

This is an uncharacterized protein from Staphylococcus aureus (strain NCTC 8325 / PS 47).